Here is a 102-residue protein sequence, read N- to C-terminus: Small ribosomal subunit protein uS14 (102 aa).

The protein belongs to the universal ribosomal protein uS14 family. As to quaternary structure, part of the 30S ribosomal subunit. Contacts proteins S3 and S10.

Binds 16S rRNA, required for the assembly of 30S particles and may also be responsible for determining the conformation of the 16S rRNA at the A site. In Wolbachia sp. subsp. Brugia malayi (strain TRS), this protein is Small ribosomal subunit protein uS14.